The chain runs to 1342 residues: DNA-directed RNA polymerase subunit beta (1342 aa).

It belongs to the RNA polymerase beta chain family. The RNAP catalytic core consists of 2 alpha, 1 beta, 1 beta' and 1 omega subunit. When a sigma factor is associated with the core the holoenzyme is formed, which can initiate transcription.

The catalysed reaction is RNA(n) + a ribonucleoside 5'-triphosphate = RNA(n+1) + diphosphate. Functionally, DNA-dependent RNA polymerase catalyzes the transcription of DNA into RNA using the four ribonucleoside triphosphates as substrates. The chain is DNA-directed RNA polymerase subunit beta from Serratia proteamaculans (strain 568).